The primary structure comprises 475 residues: tRNA modification GTPase MnmE (475 aa).

Arg24, Glu81, and Lys124 together coordinate (6S)-5-formyl-5,6,7,8-tetrahydrofolate. Residues 220 to 397 (GLSVVLAGQP…LRKELLRLVG (178 aa)) enclose the TrmE-type G domain. Asn230 provides a ligand contact to K(+). GTP is bound by residues 230–235 (NVGKSS), 249–255 (TPIAGTT), 274–277 (DTAG), and 378–380 (SAR). Ser234 contributes to the Mg(2+) binding site. Residues Thr249, Ile251, and Thr254 each contribute to the K(+) site. Position 255 (Thr255) interacts with Mg(2+). Lys475 lines the (6S)-5-formyl-5,6,7,8-tetrahydrofolate pocket.

The protein belongs to the TRAFAC class TrmE-Era-EngA-EngB-Septin-like GTPase superfamily. TrmE GTPase family. Homodimer. Heterotetramer of two MnmE and two MnmG subunits. It depends on K(+) as a cofactor.

It is found in the cytoplasm. Its function is as follows. Exhibits a very high intrinsic GTPase hydrolysis rate. Involved in the addition of a carboxymethylaminomethyl (cmnm) group at the wobble position (U34) of certain tRNAs, forming tRNA-cmnm(5)s(2)U34. This is tRNA modification GTPase MnmE from Cupriavidus pinatubonensis (strain JMP 134 / LMG 1197) (Cupriavidus necator (strain JMP 134)).